The sequence spans 261 residues: MTCGLLSVTVTFRRPAKWPGYFRHLCCRGAVMDLGPMRKSYRGDREAFEEAHLTSLDPMKQFASWFEEAVQCPDIGEANAMCLATCTRDGKPSARMLLLKGFGKDGFRFFTNYESRKGKELDSNPFASLVFYWEPLNRQVRVEGPVKKLPEKEAENYFHSRPKSSQIGAVVSRQSSVIPDREYLRKKNEELGQLYREQEVPKPEYWGGYILYPQVMEFWQGQTNRLHDRIVFRRGLATGDSPLGPMTHHGEEDWVYERLAP.

42 to 45 (RGDR) contributes to the pyridoxal 5'-phosphate binding site. 95–98 (RMLL) lines the FMN pocket. Lys-100 is a pyridoxal 5'-phosphate binding site. FMN-binding positions include 110–111 (FT), 116–117 (RK), and Gln-139. The pyridoxal 5'-phosphate site is built by Tyr-157, Arg-161, and Ser-165. FMN contacts are provided by residues 174-175 (QS) and Trp-219. 225 to 227 (RLH) contacts pyridoxal 5'-phosphate. Arg-229 contacts FMN. The residue at position 238 (Thr-238) is a Phosphothreonine. Residue Ser-241 is modified to Phosphoserine.

It belongs to the pyridoxamine 5'-phosphate oxidase family. As to quaternary structure, homodimer. FMN is required as a cofactor. As to expression, detected in adult liver.

It catalyses the reaction pyridoxamine 5'-phosphate + O2 + H2O = pyridoxal 5'-phosphate + H2O2 + NH4(+). It carries out the reaction pyridoxine 5'-phosphate + O2 = pyridoxal 5'-phosphate + H2O2. It functions in the pathway cofactor metabolism; pyridoxal 5'-phosphate salvage; pyridoxal 5'-phosphate from pyridoxamine 5'-phosphate: step 1/1. It participates in cofactor metabolism; pyridoxal 5'-phosphate salvage; pyridoxal 5'-phosphate from pyridoxine 5'-phosphate: step 1/1. In terms of biological role, catalyzes the oxidation of either pyridoxine 5'-phosphate (PNP) or pyridoxamine 5'-phosphate (PMP) into pyridoxal 5'-phosphate (PLP). The polypeptide is Pyridoxine-5'-phosphate oxidase (Pnpo) (Rattus norvegicus (Rat)).